A 744-amino-acid polypeptide reads, in one-letter code: Dual specificity protein kinase shkD (744 aa).

A disordered region spans residues 1–276 (MKRFFSNLFK…SGPPEILPEE (276 aa)). 3 stretches are compositionally biased toward low complexity: residues 25 to 70 (PTTS…NSNQ), 79 to 107 (SPST…SFTP), and 127 to 200 (TSTT…QTAS). The span at 201–210 (VNHTSSDQSL) shows a compositional bias: polar residues. Residues 211 to 236 (NAQNVTQTNNNNNNNNNNNNNNNANN) show a composition bias toward low complexity. A Protein kinase domain is found at 277 to 534 (IDRTDFLGQG…EILFRLNEIL (258 aa)). ATP is bound by residues 283–291 (LGQGSFGSV) and K304. D400 (proton acceptor) is an active-site residue. An SH2 domain is found at 641–734 (WFHGDIVREQ…LVPCPKFTQE (94 aa)).

Belongs to the protein kinase superfamily. Ser/Thr protein kinase family. SH2 domain-containing protein kinase subfamily.

It localises to the membrane. The catalysed reaction is L-seryl-[protein] + ATP = O-phospho-L-seryl-[protein] + ADP + H(+). It carries out the reaction L-threonyl-[protein] + ATP = O-phospho-L-threonyl-[protein] + ADP + H(+). Its function is as follows. Required for proper chemotaxis and phagocytosis; proper spatiotemporal control of F-actin levels in chemotaxing cells. Negative regulator of the PI3K (phosphatidylinositol 3 kinase) pathway. Predominantly phosphorylates serines and threonines and tyrosines at a lower level. The protein is Dual specificity protein kinase shkD (shkD) of Dictyostelium discoideum (Social amoeba).